Here is an 874-residue protein sequence, read N- to C-terminus: Alanine--tRNA ligase (874 aa).

Zn(2+)-binding residues include His564, His568, Cys665, and His669.

This sequence belongs to the class-II aminoacyl-tRNA synthetase family. Zn(2+) serves as cofactor.

The protein resides in the cytoplasm. The catalysed reaction is tRNA(Ala) + L-alanine + ATP = L-alanyl-tRNA(Ala) + AMP + diphosphate. In terms of biological role, catalyzes the attachment of alanine to tRNA(Ala) in a two-step reaction: alanine is first activated by ATP to form Ala-AMP and then transferred to the acceptor end of tRNA(Ala). Also edits incorrectly charged Ser-tRNA(Ala) and Gly-tRNA(Ala) via its editing domain. The sequence is that of Alanine--tRNA ligase from Polaromonas naphthalenivorans (strain CJ2).